Here is a 285-residue protein sequence, read N- to C-terminus: Acetyl-coenzyme A carboxylase carboxyl transferase subunit beta (285 aa).

Residues 22 to 285 (LWTKCEACGA…HPGVAYAPGV (264 aa)) form the CoA carboxyltransferase N-terminal domain. 4 residues coordinate Zn(2+): Cys26, Cys29, Cys45, and Cys48. Residues 26 to 48 (CEACGAQIYKKEFQENLHVCPKC) form a C4-type zinc finger.

The protein belongs to the AccD/PCCB family. In terms of assembly, acetyl-CoA carboxylase is a heterohexamer composed of biotin carboxyl carrier protein (AccB), biotin carboxylase (AccC) and two subunits each of ACCase subunit alpha (AccA) and ACCase subunit beta (AccD). Zn(2+) is required as a cofactor.

It is found in the cytoplasm. It catalyses the reaction N(6)-carboxybiotinyl-L-lysyl-[protein] + acetyl-CoA = N(6)-biotinyl-L-lysyl-[protein] + malonyl-CoA. It functions in the pathway lipid metabolism; malonyl-CoA biosynthesis; malonyl-CoA from acetyl-CoA: step 1/1. In terms of biological role, component of the acetyl coenzyme A carboxylase (ACC) complex. Biotin carboxylase (BC) catalyzes the carboxylation of biotin on its carrier protein (BCCP) and then the CO(2) group is transferred by the transcarboxylase to acetyl-CoA to form malonyl-CoA. This Thermus thermophilus (strain ATCC BAA-163 / DSM 7039 / HB27) protein is Acetyl-coenzyme A carboxylase carboxyl transferase subunit beta.